The sequence spans 480 residues: UDP-glycosyltransferase 72B1 (480 aa).

The active-site Proton acceptor is His-19. The active-site Charge relay is Asp-117. Ser-277, Trp-346, Ala-347, and His-364 together coordinate UDP. UDP-alpha-D-glucose-binding residues include Ser-277, Trp-346, Ala-347, His-364, Trp-367, Asn-368, Ser-369, Glu-372, Tyr-386, Glu-388, and Gln-389. UDP-binding residues include Asn-368, Ser-369, Glu-372, and Tyr-386.

It belongs to the UDP-glycosyltransferase family.

It carries out the reaction hydroquinone + UDP-alpha-D-glucose = hydroquinone O-beta-D-glucopyranoside + UDP + H(+). Functionally, bifunctional O-glycosyltransferase and N-glycosyltransferase that can detoxify xenobiotics. Possesses high activity to metabolize the persistent pollutants 2,4,5-trichlorophenol (TCP) and 3,4-dichloroaniline (DCA). Also active on benzoates and benzoate derivatives in vitro. This is UDP-glycosyltransferase 72B1 (UGT72B1) from Arabidopsis thaliana (Mouse-ear cress).